The following is a 470-amino-acid chain: Solvent efflux pump outer membrane protein SrpC (470 aa).

An N-terminal signal peptide occupies residues 1 to 16 (MKFKSLPMFALLMLGG). The N-palmitoyl cysteine moiety is linked to residue Cys-17. The S-diacylglycerol cysteine moiety is linked to residue Cys-17. Positions 104 to 123 (LDGQASGNRTRLPDDLSPTG) are disordered.

Belongs to the outer membrane factor (OMF) (TC 1.B.17) family.

It localises to the cell outer membrane. Functionally, the outer membrane component of an organic solvent efflux pump. Involved in export of a number of low log POW compounds including hexane (log POW 3.5), toluene (log POW 2.5) and dimethylphthalate (log POW 2.3). The solvent resistance phenotype has been postulated to depend on the operon expression level. This is Solvent efflux pump outer membrane protein SrpC (srpC) from Pseudomonas putida (Arthrobacter siderocapsulatus).